Reading from the N-terminus, the 165-residue chain is Endoribonuclease YbeY (165 aa).

The Zn(2+) site is built by His-119, His-123, and His-129.

The protein belongs to the endoribonuclease YbeY family. The cofactor is Zn(2+).

It localises to the cytoplasm. Single strand-specific metallo-endoribonuclease involved in late-stage 70S ribosome quality control and in maturation of the 3' terminus of the 16S rRNA. In Streptomyces griseus subsp. griseus (strain JCM 4626 / CBS 651.72 / NBRC 13350 / KCC S-0626 / ISP 5235), this protein is Endoribonuclease YbeY.